Here is a 31-residue protein sequence, read N- to C-terminus: Cytochrome b6-f complex subunit 6 (31 aa).

Residues 3–23 (VFLGYIIFLAAFFGLATGLFL) traverse the membrane as a helical segment.

The protein belongs to the PetL family. The 4 large subunits of the cytochrome b6-f complex are cytochrome b6, subunit IV (17 kDa polypeptide, PetD), cytochrome f and the Rieske protein, while the 4 small subunits are PetG, PetL, PetM and PetN. The complex functions as a dimer.

It localises to the plastid. Its subcellular location is the chloroplast thylakoid membrane. Component of the cytochrome b6-f complex, which mediates electron transfer between photosystem II (PSII) and photosystem I (PSI), cyclic electron flow around PSI, and state transitions. PetL is important for photoautotrophic growth as well as for electron transfer efficiency and stability of the cytochrome b6-f complex. The chain is Cytochrome b6-f complex subunit 6 from Pyropia yezoensis (Susabi-nori).